The chain runs to 304 residues: Lipoyl synthase (304 aa).

The disordered stretch occupies residues 1–21; it reads MAPELIQIDLEPRKPAPKPSW. C48, C53, C59, C74, C78, C81, and S287 together coordinate [4Fe-4S] cluster. Residues 60-276 form the Radical SAM core domain; that stretch reads WNHKTATFML…KEEAMKMGFR (217 aa).

Belongs to the radical SAM superfamily. Lipoyl synthase family. The cofactor is [4Fe-4S] cluster.

It localises to the cytoplasm. It catalyses the reaction [[Fe-S] cluster scaffold protein carrying a second [4Fe-4S](2+) cluster] + N(6)-octanoyl-L-lysyl-[protein] + 2 oxidized [2Fe-2S]-[ferredoxin] + 2 S-adenosyl-L-methionine + 4 H(+) = [[Fe-S] cluster scaffold protein] + N(6)-[(R)-dihydrolipoyl]-L-lysyl-[protein] + 4 Fe(3+) + 2 hydrogen sulfide + 2 5'-deoxyadenosine + 2 L-methionine + 2 reduced [2Fe-2S]-[ferredoxin]. The protein operates within protein modification; protein lipoylation via endogenous pathway; protein N(6)-(lipoyl)lysine from octanoyl-[acyl-carrier-protein]: step 2/2. In terms of biological role, catalyzes the radical-mediated insertion of two sulfur atoms into the C-6 and C-8 positions of the octanoyl moiety bound to the lipoyl domains of lipoate-dependent enzymes, thereby converting the octanoylated domains into lipoylated derivatives. The sequence is that of Lipoyl synthase from Koribacter versatilis (strain Ellin345).